We begin with the raw amino-acid sequence, 125 residues long: Putative oxygen-evolving enhancer protein 2-2 (125 aa).

Ser-15 carries the phosphoserine modification.

This sequence belongs to the PsbP family.

This is Putative oxygen-evolving enhancer protein 2-2 (PSBP2) from Arabidopsis thaliana (Mouse-ear cress).